The primary structure comprises 332 residues: Ribosomal RNA small subunit methyltransferase H (332 aa).

S-adenosyl-L-methionine is bound by residues 34–36 (GGH), Asp59, Phe86, Asp112, and Gln119.

The protein belongs to the methyltransferase superfamily. RsmH family.

It localises to the cytoplasm. The enzyme catalyses cytidine(1402) in 16S rRNA + S-adenosyl-L-methionine = N(4)-methylcytidine(1402) in 16S rRNA + S-adenosyl-L-homocysteine + H(+). Its function is as follows. Specifically methylates the N4 position of cytidine in position 1402 (C1402) of 16S rRNA. The polypeptide is Ribosomal RNA small subunit methyltransferase H (Chlorobium phaeobacteroides (strain BS1)).